Reading from the N-terminus, the 179-residue chain is tRNA (cytidine(56)-2'-O)-methyltransferase (179 aa).

Residues L82, G112–V116, and V130–E137 contribute to the S-adenosyl-L-methionine site.

It belongs to the aTrm56 family. Homodimer.

It is found in the cytoplasm. It catalyses the reaction cytidine(56) in tRNA + S-adenosyl-L-methionine = 2'-O-methylcytidine(56) in tRNA + S-adenosyl-L-homocysteine + H(+). In terms of biological role, specifically catalyzes the AdoMet-dependent 2'-O-ribose methylation of cytidine at position 56 in tRNAs. This Methanococcus maripaludis (strain DSM 14266 / JCM 13030 / NBRC 101832 / S2 / LL) protein is tRNA (cytidine(56)-2'-O)-methyltransferase.